The chain runs to 325 residues: Psp operon transcriptional activator (325 aa).

One can recognise a Sigma-54 factor interaction domain in the interval 15 to 237 (FLEVLEQVSH…ELKNVVERSV (223 aa)). ATP contacts are provided by residues 36 to 43 (GERGTGKE) and 99 to 108 (ADGGTLFLDE). Residues 302–321 (QKRAAELLGLTYHQFRALLK) constitute a DNA-binding region (H-T-H motif).

As to quaternary structure, forms a complex with PspA, which is composed of around 6 PspF subunits and 6 PspA subunits.

The protein localises to the cytoplasm. ATPase activity is inhibited by interaction with PspA. Under inducing conditions, the interaction is disrupted, allowing activation of psp transcription. Transcriptional activator for the phage shock protein (psp) operon (pspABCDE) and pspG gene. The sequence is that of Psp operon transcriptional activator (pspF) from Escherichia coli (strain K12).